A 600-amino-acid chain; its full sequence is MCGIVGYIGQLDAKEILLKGLEKLEYRGYDSAGIAVANEQGIHVFKEKGRIADLREVVDANVEAKAGIGHTRWATHGEPSYLNAHPHQSALGRFTLVHNGVIENYVQLKQEYLQDVELKSDTDTEVVVQVIEQFVNGGLETEEAFRKTLTLLKGSYAIALFDNDNRETIFVAKNKSPLLVGLGDTFNVVASDAMAMLQVTNEYVELMDKEMVIVTDDQVVIKNLDGDVITRASYIAELDASDIEKGTYPHYMLKETDEQPVVMRKIIQTYQDENGKLSVPGDIAAAVAEADRIYIIGCGTSYHAGLVGKQYIEMWANVPVEVHVASEFSYNMPLLSKKPLFIFLSQSGETADSRAVLVQVKALGHKALTITNVPGSTLSREADYTLLLHAGPEIAVASTKAYTAQIAVLAVLASVAADKNGINIGFDLVKELGIAANAMEALCDQKDEMEMIAREYLTVSRNAFFIGRGLDYFVCVEGALKLKEISYIQAEGFAGGELKHGTIALIEQGTPVFALATQEHVNLSIRGNVKEVAARGANTCIISLKGLDDADDRFVLPEVNPALAPLVSVVPLQLIAYYAALHRGCDVDKPRNLAKSVTVE.

Cysteine 2 functions as the Nucleophile; for GATase activity in the catalytic mechanism. Residues 2 to 217 (CGIVGYIGQL…DKEMVIVTDD (216 aa)) form the Glutamine amidotransferase type-2 domain. SIS domains lie at 283–422 (IAAA…KNGI) and 452–590 (IARE…VDKP). The active-site For Fru-6P isomerization activity is the lysine 595.

In terms of assembly, homodimer.

The protein localises to the cytoplasm. The enzyme catalyses D-fructose 6-phosphate + L-glutamine = D-glucosamine 6-phosphate + L-glutamate. Catalyzes the first step in hexosamine metabolism, converting fructose-6P into glucosamine-6P using glutamine as a nitrogen source. The sequence is that of Glutamine--fructose-6-phosphate aminotransferase [isomerizing] from Bacillus subtilis (strain 168).